Reading from the N-terminus, the 203-residue chain is Large ribosomal subunit protein uL3 (203 aa).

This sequence belongs to the universal ribosomal protein uL3 family. As to quaternary structure, part of the 50S ribosomal subunit. Forms a cluster with proteins L14 and L19.

One of the primary rRNA binding proteins, it binds directly near the 3'-end of the 23S rRNA, where it nucleates assembly of the 50S subunit. The sequence is that of Large ribosomal subunit protein uL3 from Christiangramia forsetii (strain DSM 17595 / CGMCC 1.15422 / KT0803) (Gramella forsetii).